The primary structure comprises 2513 residues: Highly reducing polyketide synthase ACRTS2 (2513 aa).

Residues 4–429 (DTPVAIIGVS…GSSSAVIIDR (426 aa)) form the Ketosynthase family 3 (KS3) domain. Catalysis depends on for beta-ketoacyl synthase activity residues Cys-174, His-313, and His-353. The interval 547 to 875 (VFTGQGAQYA…NYLPSLLRGT (329 aa)) is malonyl-CoA:ACP transacylase (MAT) domain. The For malonyltransferase activity role is filled by Ser-635. Residues 942–1074 (HALIGRKAPS…GKIEPEIADL (133 aa)) are N-terminal hotdog fold. The interval 942 to 1253 (HALIGRKAPS…TFRTVSSADD (312 aa)) is dehydratase (DH) domain. Residues 942–1254 (HALIGRKAPS…FRTVSSADDQ (313 aa)) enclose the PKS/mFAS DH domain. The active-site Proton acceptor; for dehydratase activity is His-974. The tract at residues 1092 to 1254 (AGVIEHDMDN…FRTVSSADDQ (163 aa)) is C-terminal hotdog fold. The Proton donor; for dehydratase activity role is filled by Asp-1161. Residues 1407-1600 (SKIIGYLTEN…IPTNYRTDNP (194 aa)) are methyltransferase (CMet) domain. The enoylreductase (ER) domain stretch occupies residues 1816-2127 (GSPDTIYFRR…SRDHIGRLVV (312 aa)). The interval 2152 to 2327 (ATYLVAGGTR…YTVSIGLPVV (176 aa)) is ketoreductase (KR) domain. In terms of domain architecture, Carrier spans 2433–2510 (DPLTGLIEAL…ALAVNILAQR (78 aa)). Ser-2470 carries the O-(pantetheine 4'-phosphoryl)serine modification.

The protein operates within mycotoxin biosynthesis. In terms of biological role, highly reducing polyketide synthase; part of the gene cluster that mediates the biosynthesis of the host-selective toxins (HSTs) ACR-toxins responsible for brown spot of rough lemon disease by the rough lemon pathotype. ACR-toxins cause uncoupling of mitochondrial oxidative-phosphorylation similar to that of classic protonophore. The structure of the major form of ACR-toxin (ACR-toxin I) consists of an alpha-dihydropyrone ring in a 19-carbon polyalcohol, a typical polyketide structure. Minor toxins were characterized as having a pyrone ring with polyalcohol side chains different in length and showing weaker toxicity. The highly reducing polyketide synthase ACRTS2 has all necessary enzymatic domains for multiple cycles of condensation and beta-keto processing. The cytochrome P450 monooxygenase ACRTS1 has also been shown to be essential for ACR-toxin biosynthesis, however its exact role in the pathway has not been elucidated yet. The sequence is that of Highly reducing polyketide synthase ACRTS2 from Alternaria alternata (Alternaria rot fungus).